A 222-amino-acid chain; its full sequence is Germin-like protein subfamily 1 member 16 (222 aa).

The N-terminal stretch at Met-1–Ala-22 is a signal peptide. A disulfide bridge links Cys-32 with Cys-48. Residues Ser-62–Lys-213 enclose the Cupin type-1 domain. Asn-77 is a glycosylation site (N-linked (GlcNAc...) asparagine). Positions 110, 112, 117, and 159 each coordinate Mn(2+).

This sequence belongs to the germin family. Oligomer (believed to be a pentamer but probably hexamer).

The protein localises to the secreted. Its subcellular location is the extracellular space. The protein resides in the apoplast. Functionally, may play a role in plant defense. Probably has no oxalate oxidase activity even if the active site is conserved. In Arabidopsis thaliana (Mouse-ear cress), this protein is Germin-like protein subfamily 1 member 16.